A 60-amino-acid polypeptide reads, in one-letter code: Large ribosomal subunit protein bL32 (60 aa).

The span at 1 to 20 (MAVPKRKTSPSRRNMRRSHH) shows a compositional bias: basic residues. Residues 1–60 (MAVPKRKTSPSRRNMRRSHHALGANSFIEDKDTGELRRPHHVDLKTGMYNGKQILTPKED) are disordered. The segment covering 28 to 44 (IEDKDTGELRRPHHVDL) has biased composition (basic and acidic residues).

Belongs to the bacterial ribosomal protein bL32 family.

This Caulobacter vibrioides (strain ATCC 19089 / CIP 103742 / CB 15) (Caulobacter crescentus) protein is Large ribosomal subunit protein bL32.